The chain runs to 157 residues: 2-C-methyl-D-erythritol 2,4-cyclodiphosphate synthase (157 aa).

A divalent metal cation contacts are provided by Asp8 and His10. 4-CDP-2-C-methyl-D-erythritol 2-phosphate contacts are provided by residues 8 to 10 and 34 to 35; these read DVH and HS. His42 provides a ligand contact to a divalent metal cation. 4-CDP-2-C-methyl-D-erythritol 2-phosphate is bound by residues 56–58, 61–65, 100–106, 132–135, Phe139, and Arg142; these read DIG, FPDTD, AQAPKML, and TTTE.

Belongs to the IspF family. As to quaternary structure, homotrimer. Requires a divalent metal cation as cofactor.

The enzyme catalyses 4-CDP-2-C-methyl-D-erythritol 2-phosphate = 2-C-methyl-D-erythritol 2,4-cyclic diphosphate + CMP. It participates in isoprenoid biosynthesis; isopentenyl diphosphate biosynthesis via DXP pathway; isopentenyl diphosphate from 1-deoxy-D-xylulose 5-phosphate: step 4/6. Functionally, involved in the biosynthesis of isopentenyl diphosphate (IPP) and dimethylallyl diphosphate (DMAPP), two major building blocks of isoprenoid compounds. Catalyzes the conversion of 4-diphosphocytidyl-2-C-methyl-D-erythritol 2-phosphate (CDP-ME2P) to 2-C-methyl-D-erythritol 2,4-cyclodiphosphate (ME-CPP) with a corresponding release of cytidine 5-monophosphate (CMP). The chain is 2-C-methyl-D-erythritol 2,4-cyclodiphosphate synthase from Photorhabdus laumondii subsp. laumondii (strain DSM 15139 / CIP 105565 / TT01) (Photorhabdus luminescens subsp. laumondii).